The sequence spans 273 residues: Dermonecrotic toxin LapSicTox-alphaIB1aii (273 aa).

The active site involves H5. E25 and D27 together coordinate Mg(2+). The Nucleophile role is filled by H41. Intrachain disulfides connect C45–C51 and C47–C190. A Mg(2+)-binding site is contributed by D85. A glycan (N-linked (GlcNAc...) asparagine) is linked at N250.

The protein belongs to the arthropod phospholipase D family. Class II subfamily. Mg(2+) serves as cofactor. As to expression, expressed by the venom gland.

The protein localises to the secreted. The catalysed reaction is an N-(acyl)-sphingosylphosphocholine = an N-(acyl)-sphingosyl-1,3-cyclic phosphate + choline. It catalyses the reaction an N-(acyl)-sphingosylphosphoethanolamine = an N-(acyl)-sphingosyl-1,3-cyclic phosphate + ethanolamine. The enzyme catalyses a 1-acyl-sn-glycero-3-phosphocholine = a 1-acyl-sn-glycero-2,3-cyclic phosphate + choline. It carries out the reaction a 1-acyl-sn-glycero-3-phosphoethanolamine = a 1-acyl-sn-glycero-2,3-cyclic phosphate + ethanolamine. Its function is as follows. Dermonecrotic toxins cleave the phosphodiester linkage between the phosphate and headgroup of certain phospholipids (sphingolipid and lysolipid substrates), forming an alcohol (often choline) and a cyclic phosphate. This toxin acts on sphingomyelin (SM). It may also act on ceramide phosphoethanolamine (CPE), lysophosphatidylcholine (LPC) and lysophosphatidylethanolamine (LPE), but not on lysophosphatidylserine (LPS), and lysophosphatidylglycerol (LPG). It acts by transphosphatidylation, releasing exclusively cyclic phosphate products as second products. Induces dermonecrosis, hemolysis, increased vascular permeability, edema, inflammatory response, and platelet aggregation. This Loxosceles apachea (Apache recluse spider) protein is Dermonecrotic toxin LapSicTox-alphaIB1aii.